Here is a 368-residue protein sequence, read N- to C-terminus: UDP-N-acetylglucosamine--N-acetylmuramyl-(pentapeptide) pyrophosphoryl-undecaprenol N-acetylglucosamine transferase (368 aa).

UDP-N-acetyl-alpha-D-glucosamine is bound by residues 16-18 (TGG), Asn-130, Arg-171, Ser-197, and Gln-296.

The protein belongs to the glycosyltransferase 28 family. MurG subfamily.

The protein resides in the cell inner membrane. It catalyses the reaction di-trans,octa-cis-undecaprenyl diphospho-N-acetyl-alpha-D-muramoyl-L-alanyl-D-glutamyl-meso-2,6-diaminopimeloyl-D-alanyl-D-alanine + UDP-N-acetyl-alpha-D-glucosamine = di-trans,octa-cis-undecaprenyl diphospho-[N-acetyl-alpha-D-glucosaminyl-(1-&gt;4)]-N-acetyl-alpha-D-muramoyl-L-alanyl-D-glutamyl-meso-2,6-diaminopimeloyl-D-alanyl-D-alanine + UDP + H(+). It participates in cell wall biogenesis; peptidoglycan biosynthesis. Its function is as follows. Cell wall formation. Catalyzes the transfer of a GlcNAc subunit on undecaprenyl-pyrophosphoryl-MurNAc-pentapeptide (lipid intermediate I) to form undecaprenyl-pyrophosphoryl-MurNAc-(pentapeptide)GlcNAc (lipid intermediate II). This Acidiphilium cryptum (strain JF-5) protein is UDP-N-acetylglucosamine--N-acetylmuramyl-(pentapeptide) pyrophosphoryl-undecaprenol N-acetylglucosamine transferase.